A 390-amino-acid chain; its full sequence is Putative nickel insertion protein (390 aa).

It belongs to the LarC family.

In Geotalea daltonii (strain DSM 22248 / JCM 15807 / FRC-32) (Geobacter daltonii), this protein is Putative nickel insertion protein.